Here is a 273-residue protein sequence, read N- to C-terminus: Dermonecrotic toxin SdSicTox-betaIIB1aiii (273 aa).

Residue His4 is part of the active site. Mg(2+) is bound by residues Glu24 and Asp26. His40 (nucleophile) is an active-site residue. Cystine bridges form between Cys44-Cys50 and Cys46-Cys189. Asp84 serves as a coordination point for Mg(2+).

Belongs to the arthropod phospholipase D family. Class II subfamily. Requires Mg(2+) as cofactor. Expressed by the venom gland.

The protein resides in the secreted. The enzyme catalyses an N-(acyl)-sphingosylphosphocholine = an N-(acyl)-sphingosyl-1,3-cyclic phosphate + choline. It catalyses the reaction an N-(acyl)-sphingosylphosphoethanolamine = an N-(acyl)-sphingosyl-1,3-cyclic phosphate + ethanolamine. It carries out the reaction a 1-acyl-sn-glycero-3-phosphocholine = a 1-acyl-sn-glycero-2,3-cyclic phosphate + choline. The catalysed reaction is a 1-acyl-sn-glycero-3-phosphoethanolamine = a 1-acyl-sn-glycero-2,3-cyclic phosphate + ethanolamine. Dermonecrotic toxins cleave the phosphodiester linkage between the phosphate and headgroup of certain phospholipids (sphingolipid and lysolipid substrates), forming an alcohol (often choline) and a cyclic phosphate. This toxin acts on sphingomyelin (SM). It may also act on ceramide phosphoethanolamine (CPE), lysophosphatidylcholine (LPC) and lysophosphatidylethanolamine (LPE), but not on lysophosphatidylserine (LPS), and lysophosphatidylglycerol (LPG). It acts by transphosphatidylation, releasing exclusively cyclic phosphate products as second products. Induces dermonecrosis, hemolysis, increased vascular permeability, edema, inflammatory response, and platelet aggregation. The protein is Dermonecrotic toxin SdSicTox-betaIIB1aiii of Sicarius cf. damarensis (strain GJB-2008) (Six-eyed sand spider).